A 209-amino-acid chain; its full sequence is Ribosomal RNA large subunit methyltransferase E (209 aa).

Residues Gly-63, Trp-65, Asp-83, Asp-99, and Asp-124 each contribute to the S-adenosyl-L-methionine site. Lys-164 functions as the Proton acceptor in the catalytic mechanism.

This sequence belongs to the class I-like SAM-binding methyltransferase superfamily. RNA methyltransferase RlmE family.

Its subcellular location is the cytoplasm. The catalysed reaction is uridine(2552) in 23S rRNA + S-adenosyl-L-methionine = 2'-O-methyluridine(2552) in 23S rRNA + S-adenosyl-L-homocysteine + H(+). Its function is as follows. Specifically methylates the uridine in position 2552 of 23S rRNA at the 2'-O position of the ribose in the fully assembled 50S ribosomal subunit. The polypeptide is Ribosomal RNA large subunit methyltransferase E (Vibrio campbellii (strain ATCC BAA-1116)).